Consider the following 194-residue polypeptide: Fe/S biogenesis protein NfuA (194 aa).

[4Fe-4S] cluster contacts are provided by C151 and C154.

It belongs to the NfuA family. Homodimer. Requires [4Fe-4S] cluster as cofactor.

Its function is as follows. Involved in iron-sulfur cluster biogenesis. Binds a 4Fe-4S cluster, can transfer this cluster to apoproteins, and thereby intervenes in the maturation of Fe/S proteins. Could also act as a scaffold/chaperone for damaged Fe/S proteins. This is Fe/S biogenesis protein NfuA from Aliivibrio salmonicida (strain LFI1238) (Vibrio salmonicida (strain LFI1238)).